The sequence spans 125 residues: Small ribosomal subunit protein uS13 (125 aa).

The disordered stretch occupies residues 95 to 125 (GLPVRGQRTKNNCRTRKGKRKTVANKKKATK).

It belongs to the universal ribosomal protein uS13 family. As to quaternary structure, part of the 30S ribosomal subunit. Forms a loose heterodimer with protein S19. Forms two bridges to the 50S subunit in the 70S ribosome.

Functionally, located at the top of the head of the 30S subunit, it contacts several helices of the 16S rRNA. In the 70S ribosome it contacts the 23S rRNA (bridge B1a) and protein L5 of the 50S subunit (bridge B1b), connecting the 2 subunits; these bridges are implicated in subunit movement. Contacts the tRNAs in the A and P-sites. In Cytophaga hutchinsonii (strain ATCC 33406 / DSM 1761 / CIP 103989 / NBRC 15051 / NCIMB 9469 / D465), this protein is Small ribosomal subunit protein uS13.